Here is a 275-residue protein sequence, read N- to C-terminus: Dermonecrotic toxin SpeSicTox-betaIIA2iii (275 aa).

His5 is a catalytic residue. Mg(2+) is bound by residues Glu25 and Asp27. His41 (nucleophile) is an active-site residue. Disulfide bonds link Cys45–Cys51 and Cys47–Cys190. Asp85 is a Mg(2+) binding site.

The protein belongs to the arthropod phospholipase D family. Class II subfamily. It depends on Mg(2+) as a cofactor. In terms of tissue distribution, expressed by the venom gland.

Its subcellular location is the secreted. It carries out the reaction an N-(acyl)-sphingosylphosphocholine = an N-(acyl)-sphingosyl-1,3-cyclic phosphate + choline. The catalysed reaction is an N-(acyl)-sphingosylphosphoethanolamine = an N-(acyl)-sphingosyl-1,3-cyclic phosphate + ethanolamine. It catalyses the reaction a 1-acyl-sn-glycero-3-phosphocholine = a 1-acyl-sn-glycero-2,3-cyclic phosphate + choline. The enzyme catalyses a 1-acyl-sn-glycero-3-phosphoethanolamine = a 1-acyl-sn-glycero-2,3-cyclic phosphate + ethanolamine. Its function is as follows. Dermonecrotic toxins cleave the phosphodiester linkage between the phosphate and headgroup of certain phospholipids (sphingolipid and lysolipid substrates), forming an alcohol (often choline) and a cyclic phosphate. This toxin acts on sphingomyelin (SM). It may also act on ceramide phosphoethanolamine (CPE), lysophosphatidylcholine (LPC) and lysophosphatidylethanolamine (LPE), but not on lysophosphatidylserine (LPS), and lysophosphatidylglycerol (LPG). It acts by transphosphatidylation, releasing exclusively cyclic phosphate products as second products. Induces dermonecrosis, hemolysis, increased vascular permeability, edema, inflammatory response, and platelet aggregation. This chain is Dermonecrotic toxin SpeSicTox-betaIIA2iii, found in Sicarius peruensis (Six-eyed sand spider).